The sequence spans 307 residues: Nucleotide-binding protein Arth_2083 (307 aa).

30–37 (GMSGAGRS) lines the ATP pocket. 81–84 (DVRS) is a binding site for GTP.

The protein belongs to the RapZ-like family.

Displays ATPase and GTPase activities. The chain is Nucleotide-binding protein Arth_2083 from Arthrobacter sp. (strain FB24).